Reading from the N-terminus, the 200-residue chain is GTP-dependent dephospho-CoA kinase (200 aa).

Asp-56, Val-57, Val-58, Asp-75, and Glu-132 together coordinate GTP.

This sequence belongs to the GTP-dependent DPCK family.

The enzyme catalyses 3'-dephospho-CoA + GTP = GDP + CoA + H(+). Its pathway is cofactor biosynthesis; coenzyme A biosynthesis. Its function is as follows. Catalyzes the GTP-dependent phosphorylation of the 3'-hydroxyl group of dephosphocoenzyme A to form coenzyme A (CoA). This is GTP-dependent dephospho-CoA kinase from Caldivirga maquilingensis (strain ATCC 700844 / DSM 13496 / JCM 10307 / IC-167).